The chain runs to 253 residues: Tyrosine recombinase XerD-like (253 aa).

The Core-binding (CB) domain occupies 8 to 81; sequence KQLTTQITNF…AVNQFLLYLY (74 aa). One can recognise a Tyr recombinase domain in the interval 93 to 253; the sequence is SETAPLPSQQ…PVTLEKYYKT (161 aa). Catalysis depends on residues Lys-157 and Arg-218. The active-site O-(3'-phospho-DNA)-tyrosine intermediate is the Tyr-250.

The protein belongs to the 'phage' integrase family. XerD-like subfamily.

Its subcellular location is the cytoplasm. Putative tyrosine recombinase. Not involved in the cutting and rejoining of the recombining DNA molecules on dif(SL) site. The sequence is that of Tyrosine recombinase XerD-like from Streptococcus thermophilus (strain CNRZ 1066).